We begin with the raw amino-acid sequence, 172 residues long: Small ribosomal subunit protein uS5 (172 aa).

An S5 DRBM domain is found at 17 to 80 (LKEKMIQVNR…DAARRDMVKV (64 aa)).

This sequence belongs to the universal ribosomal protein uS5 family. In terms of assembly, part of the 30S ribosomal subunit. Contacts proteins S4 and S8.

With S4 and S12 plays an important role in translational accuracy. Its function is as follows. Located at the back of the 30S subunit body where it stabilizes the conformation of the head with respect to the body. The chain is Small ribosomal subunit protein uS5 from Methylibium petroleiphilum (strain ATCC BAA-1232 / LMG 22953 / PM1).